A 743-amino-acid polypeptide reads, in one-letter code: Pentatricopeptide repeat-containing protein At2g16880 (743 aa).

PPR repeat units follow at residues 130-164 (SKAL…KLKP), 165-202 (NLLT…GVSL), 203-233 (NVQT…MVSE), 239-273 (DNVT…GLVP), 274-308 (NRVT…NVLP), 309-343 (DLCT…KLQP), 344-378 (DVVT…GVKA), 379-414 (NQVT…GFSP), 415-449 (DIVT…GIKM), 450-484 (NTIT…GFIV), 485-519 (DEVT…KITP), 520-554 (TVST…GLLP), 555-589 (DDST…SFKP), 590-620 (DNYT…LIEE), 624-658 (DTVT…GLEP), and 659-689 (DRFT…FSGK).

The protein belongs to the PPR family. P subfamily.

The protein is Pentatricopeptide repeat-containing protein At2g16880 of Arabidopsis thaliana (Mouse-ear cress).